Reading from the N-terminus, the 515-residue chain is Vesicular acetylcholine transporter (515 aa).

At Met1–Lys40 the chain is on the cytoplasmic side. The chain crosses the membrane as a helical span at residues Ile41 to Val61. At Pro62–Gly112 the chain is on the lumenal, vesicle side. N-linked (GlcNAc...) asparagine glycans are attached at residues Asn84, Asn87, and Asn92. Residues Val113–Ile133 form a helical membrane-spanning segment. Topologically, residues Asp134–Asp139 are cytoplasmic. The helical transmembrane segment at Ile140–Glu160 threads the bilayer. Over Ser161–Arg169 the chain is Lumenal, vesicle. The helical transmembrane segment at Ser170–Lys190 threads the bilayer. The Cytoplasmic segment spans residues Tyr191–Leu201. The chain crosses the membrane as a helical span at residues Gly202–Leu222. Over Tyr223–Trp229 the chain is Lumenal, vesicle. A helical membrane pass occupies residues Val230–Val250. Residues Thr251–Met271 are Cytoplasmic-facing. Residues Ile272–Phe292 form a helical membrane-spanning segment. The Lumenal, vesicle segment spans residues Leu293–Trp310. A glycan (N-linked (GlcNAc...) asparagine) is linked at Asn306. Residues Gln311–Val331 form a helical membrane-spanning segment. Over Lys332–Gln341 the chain is Cytoplasmic. A helical membrane pass occupies residues Trp342–Cys362. Residues Arg363–Glu367 are Lumenal, vesicle-facing. Residues Leu368–Pro388 traverse the membrane as a helical segment. The Cytoplasmic portion of the chain corresponds to Thr389 to Ser404. Residues Val405 to Gly425 traverse the membrane as a helical segment. At Gln426 to Gly432 the chain is on the lumenal, vesicle side. Residues Phe433–Phe453 traverse the membrane as a helical segment. Residues Leu454 to Glu515 are Cytoplasmic-facing. The interval Ala489 to Glu515 is disordered.

This sequence belongs to the major facilitator superfamily. Vesicular transporter family. In terms of tissue distribution, electric lobe.

It is found in the membrane. Involved in acetylcholine transport into synaptic vesicles. The polypeptide is Vesicular acetylcholine transporter (Tetronarce californica (Pacific electric ray)).